We begin with the raw amino-acid sequence, 974 residues long: Leucine-rich repeat receptor-like kinase protein SUNN (974 aa).

The N-terminal stretch at 1-20 (MKNITCYLLLLCMLFTTCYS) is a signal peptide. 4 N-linked (GlcNAc...) asparagine glycosylation sites follow: N75, N104, N123, and N136. 20 LRR repeats span residues 92–116 (LNML…LSKL), 117–141 (TSLR…TFGM), 143–165 (KLEA…IVSL), 166–188 (MKLK…SYSE), 189–213 (FQKL…LSKL), 238–262 (IKSL…LGNL), 263–286 (ENLD…LSSM), 288–309 (SLMS…TFSK), 310–334 (LKNL…IGDL), 335–358 (PNLE…LGSN), 360–382 (KFIY…LCKS), 383–406 (KKLK…IGPC), 407–430 (KSLE…IFQL), 431–454 (PSVQ…ISGN), 456–477 (LGNL…MKNL), 478–501 (RSLQ…VFAL), 503–525 (VLTR…VTQC), 527–549 (SLTA…MKNL), 550–573 (KVLS…IRFM), and 574–598 (TSLT…QFLV). N250 and N274 each carry an N-linked (GlcNAc...) asparagine glycan. Residues N312 and N346 are each glycosylated (N-linked (GlcNAc...) asparagine). N-linked (GlcNAc...) asparagine glycosylation is found at N508 and N513. N-linked (GlcNAc...) asparagine glycans are attached at residues N556 and N585. The helical transmembrane segment at 635–655 (VVIAIVFATAVLMVIVTLHMM) threads the bilayer. One can recognise a Protein kinase domain in the interval 685-972 (LKEENIIGKG…PPHSTSHNLI (288 aa)). ATP-binding positions include 691–699 (IGKGGAGIV) and K713. D810 serves as the catalytic Proton acceptor.

Belongs to the protein kinase superfamily. Ser/Thr protein kinase family. Expressed in roots and shoots. Expressed in the vasculature of leaves, petioles, stems and roots.

It localises to the cell membrane. The catalysed reaction is L-seryl-[protein] + ATP = O-phospho-L-seryl-[protein] + ADP + H(+). It catalyses the reaction L-threonyl-[protein] + ATP = O-phospho-L-threonyl-[protein] + ADP + H(+). Functionally, LRR receptor kinase involved in the regulation of root growth and root nodule organogenesis. Involved in long distance nodulation signaling events. Involved in the autoregulation of nodulation (AON), a long distance systemic signaling from root to shoot and back again, which allows legumes to limit the number of root nodules formed based on available nitrogen and previous rhizobial colonization. Acts from shoot to root to control AON. Interacts with CLE12 and CLE13 signaling to control nodule numbers. Required for the modulation of shoot-to-root auxin transport in response to altered nitrogen tissue concentrations and in the absence of rhizobia. Shoot-to-root auxin transport influences lateral root density and length. Involved in the regulation of root colonization by arbuscular mycorrhizal (AM) fungi. Interacts with CLE33 and CL53 signaling to repress strigolactone biosynthetic genes and strigolactone content in the roots, and consequently reduces the promotion of further colonization by AM fungi. The chain is Leucine-rich repeat receptor-like kinase protein SUNN from Medicago truncatula (Barrel medic).